Here is a 938-residue protein sequence, read N- to C-terminus: ATP-dependent RNA helicase DDX42 (938 aa).

Residues 1–18 (MNWNKGGPGTKRGFGFGG) are compositionally biased toward gly residues. The disordered stretch occupies residues 1–114 (MNWNKGGPGT…KPVDSDSDDD (114 aa)). An N6-acetyllysine modification is found at K5. R12 is subject to Omega-N-methylarginine. Residues 35–52 (SHSAFGATSSSSGFGKSA) show a composition bias toward low complexity. The residue at position 58 (S58) is a Phosphoserine. Positions 70 to 84 (DEENAYFEDEEEDSS) are enriched in acidic residues. Phosphoserine occurs at positions 96, 104, 109, and 111. The stretch at 116–157 (LEAFMAEVEDQAARDMKRLEEKDKERKNVKGIRDDIEEEDDQ) forms a coiled coil. The segment at 182–203 (EYDSDGNPIAPTKKIIDPLPPI) is disordered. S185 bears the Phosphoserine mark. The Q motif signature appears at 253 to 281 (SSFAHFGFDEQLMHQIRKSEYTQPTPIQC). Residues 284 to 459 (VPVALSGRDM…RDILIDPIRV (176 aa)) enclose the Helicase ATP-binding domain. Position 297–304 (297–304 (AKTGSGKT)) interacts with ATP. Positions 407 to 410 (DEAD) match the DEAD box motif. Residues 487–632 (WLTRRLVEFT…HVSKELLDLA (146 aa)) enclose the Helicase C-terminal domain. 2 stretches are compositionally biased toward polar residues: residues 737 to 757 (LNSV…SPVT) and 786 to 798 (GVNN…NSRE). A disordered region spans residues 737–938 (LNSVPTNSAQ…PKRKKSRWDS (202 aa)). A necessary for interaction with TP53BP2 region spans residues 738–833 (NSVPTNSAQQ…TGNRHSDSPR (96 aa)). The residue at position 754 (S754) is a Phosphoserine. Basic and acidic residues predominate over residues 820-920 (SHGETGNRHS…KVDSKTDKTA (101 aa)). K899 participates in a covalent cross-link: Glycyl lysine isopeptide (Lys-Gly) (interchain with G-Cter in SUMO2).

The protein belongs to the DEAD box helicase family. DDX42 subfamily. As to quaternary structure, transient component of the SF3B subcomplex of the 17S U2 SnRNP complex. Interacts (via the C-terminus) with TP53BP2; the interaction is not inhibitied by TP53BP2 ubiquitination and is independent of p53/TP53. In terms of tissue distribution, expressed in several cell lines (at protein level). Expressed in liver, lung, tonsil, thymus, muscle and pancreatic islets.

Its subcellular location is the cytoplasm. The protein resides in the nucleus. The protein localises to the cajal body. It localises to the nucleus speckle. The catalysed reaction is ATP + H2O = ADP + phosphate + H(+). Functionally, ATP-dependent RNA helicase that binds to partially double-stranded RNAs (dsRNAs) in order to unwind RNA secondary structures. Unwinding is promoted in the presence of single-strand binding proteins. Also mediates RNA duplex formation thereby displacing the single-strand RNA binding protein. ATP and ADP modulate its activity: ATP binding and hydrolysis by DDX42 triggers RNA strand separation, whereas the ADP-bound form of the protein triggers annealing of complementary RNA strands. Required for assembly of the 17S U2 SnRNP complex of the spliceosome, a large ribonucleoprotein complex that removes introns from transcribed pre-mRNAs: DDX42 associates transiently with the SF3B subcomplex of the 17S U2 SnRNP complex and is released after fulfilling its role in the assembly of 17S U2 SnRNP. Involved in the survival of cells by interacting with TP53BP2 and thereby counteracting the apoptosis-stimulating activity of TP53BP2. Relocalizes TP53BP2 to the cytoplasm. The protein is ATP-dependent RNA helicase DDX42 of Homo sapiens (Human).